The sequence spans 207 residues: N-(5'-phosphoribosyl)anthranilate isomerase (207 aa).

This sequence belongs to the TrpF family.

It catalyses the reaction N-(5-phospho-beta-D-ribosyl)anthranilate = 1-(2-carboxyphenylamino)-1-deoxy-D-ribulose 5-phosphate. The protein operates within amino-acid biosynthesis; L-tryptophan biosynthesis; L-tryptophan from chorismate: step 3/5. The protein is N-(5'-phosphoribosyl)anthranilate isomerase of Halorhodospira halophila (strain DSM 244 / SL1) (Ectothiorhodospira halophila (strain DSM 244 / SL1)).